The primary structure comprises 337 residues: Phytanoyl-CoA dioxygenase, peroxisomal (337 aa).

The transit peptide at 1 to 30 (MDRNRASARLTVLLRHLGCRSAGTIIAHHT) directs the protein to the peroxisome. N6-succinyllysine is present on residues Lys59 and Lys108. 2-oxoglutarate contacts are provided by residues Lys120, Met157, 175–177 (HQD), and Trp193. Fe cation is bound by residues His175 and Asp177. N6-succinyllysine is present on Lys252. Residue His264 coordinates Fe cation. 2-oxoglutarate contacts are provided by Ser266 and Arg275.

This sequence belongs to the PhyH family. As to quaternary structure, interacts with FKBP52 and PHYHIP. Fe cation is required as a cofactor. It depends on L-ascorbate as a cofactor. ATP serves as cofactor. The cofactor is Mg(2+).

Its subcellular location is the peroxisome. It carries out the reaction phytanoyl-CoA + 2-oxoglutarate + O2 = 2-hydroxyphytanoyl-CoA + succinate + CO2. The enzyme catalyses 3-methylhexadecanoyl-CoA + 2-oxoglutarate + O2 = 2-hydroxy-3-methylhexadecanoyl-CoA + succinate + CO2. The catalysed reaction is hexadecanoyl-CoA + 2-oxoglutarate + O2 = 2-hydroxyhexadecanoyl-CoA + succinate + CO2. It catalyses the reaction octanoyl-CoA + 2-oxoglutarate + O2 = 2-hydroxyoctanoyl-CoA + succinate + CO2. It carries out the reaction decanoyl-CoA + 2-oxoglutarate + O2 = 2-hydroxydecanoyl-CoA + succinate + CO2. The enzyme catalyses 3-methylbutanoyl-CoA + 2-oxoglutarate + O2 = 2-hydroxy-3-methylbutanoyl-CoA + succinate + CO2. The catalysed reaction is heptadecanoyl-CoA + 2-oxoglutarate + O2 = 2-hydroxyheptadecanoyl-CoA + succinate + CO2. It catalyses the reaction eicosanoyl-CoA + 2-oxoglutarate + O2 = 2-hydroxyeicosanoyl-CoA + succinate + CO2. It carries out the reaction octadecanoyl-CoA + 2-oxoglutarate + O2 = 2-hydroxyoctadecanoyl-CoA + succinate + CO2. The enzyme catalyses dodecanoyl-CoA + 2-oxoglutarate + O2 = 2-hydroxydodecanoyl-CoA + succinate + CO2. The catalysed reaction is tetradecanoyl-CoA + 2-oxoglutarate + O2 = 2-hydroxytetradecanoyl-CoA + succinate + CO2. It catalyses the reaction hexanoyl-CoA + 2-oxoglutarate + O2 = 2-hydroxyhexanoyl-CoA + succinate + CO2. It carries out the reaction butanoyl-CoA + 2-oxoglutarate + O2 = 2-hydroxybutanoyl-CoA + succinate + CO2. The enzyme catalyses 3-methylnonanoyl-CoA + 2-oxoglutarate + O2 = 2-hydroxy-3-methylnonanoyl-CoA + succinate + CO2. The catalysed reaction is 3-methylundecanoyl-CoA + 2-oxoglutarate + O2 = 2-hydroxy-3-methylundecanoyl-CoA + succinate + CO2. It catalyses the reaction 3-methyldodecanoyl-CoA + 2-oxoglutarate + O2 = 2-hydroxy-3-methyldodecanoyl-CoA + succinate + CO2. Its pathway is lipid metabolism; fatty acid metabolism. Functionally, catalyzes the 2-hydroxylation of not only racemic phytanoyl-CoA and the isomers of 3-methylhexadecanoyl-CoA, but also a variety of other mono- branched 3-methylacyl-CoA esters (with a chain length of at least seven carbon atoms) and straight-chain acyl-CoA esters (with a chain length longer than four carbon atoms). Does not hydroxylate long and very long straight chain acyl-CoAs or 2-methyl-and 4-methyl-branched acyl-CoAs. The chain is Phytanoyl-CoA dioxygenase, peroxisomal (PHYH) from Bos taurus (Bovine).